The sequence spans 65 residues: Large ribosomal subunit protein bL35c (65 aa).

This sequence belongs to the bacterial ribosomal protein bL35 family.

The protein localises to the plastid. The protein resides in the cyanelle. The chain is Large ribosomal subunit protein bL35c (rpl35) from Cyanophora paradoxa.